Reading from the N-terminus, the 302-residue chain is Chloramphenicol resistance protein (302 aa).

Its subcellular location is the cell membrane. Functionally, this protein is thought to be a membrane-associated barrier of drug uptake. This is Chloramphenicol resistance protein (cml) from Escherichia coli.